Reading from the N-terminus, the 314-residue chain is MSSNDEKHAVAIIGSGNIGTDLMVKILRHGKHLKMGAFVGIDPESDGLKRAERMGVPTVTTGIDGLLAHPDFGSIRYVFDATSAGAHARHEQLLRPHGVRVIDLTPAAIGPFVVPAVNIDQHLDSPNVNMVTCGGQATIPMVAAVSRVVPVEYAEIVASISSRSAGPGTRANIDEFTETTSNAIVQVGGAKAGKAIIVLNPAEPPLIMRDTVYCLVPGDASQSAIVESVEQMVDSVRTYVPGYRLKQAVQFDEFKGRMPQELATVRAPRLKVSVFLEVEGAGHYLPSYAGNLDIMTSAALATAERIAARQPVTA.

15-18 (SGNI) is an NAD(+) binding site. The active-site Acyl-thioester intermediate is the cysteine 133. Residues 164–172 (SAGPGTRAN) and asparagine 291 each bind NAD(+).

It belongs to the acetaldehyde dehydrogenase family.

It carries out the reaction acetaldehyde + NAD(+) + CoA = acetyl-CoA + NADH + H(+). The chain is Acetaldehyde dehydrogenase 1 from Paraburkholderia xenovorans (strain LB400).